The primary structure comprises 319 residues: HTH-type transcriptional regulator YidZ (319 aa).

Residues L8–T65 enclose the HTH lysR-type domain. Positions V25–S44 form a DNA-binding region, H-T-H motif.

It belongs to the LysR transcriptional regulatory family.

Involved in anaerobic NO protection. The chain is HTH-type transcriptional regulator YidZ from Citrobacter koseri (strain ATCC BAA-895 / CDC 4225-83 / SGSC4696).